Reading from the N-terminus, the 169-residue chain is Protein-export protein SecB (169 aa).

This sequence belongs to the SecB family. In terms of assembly, homotetramer, a dimer of dimers. One homotetramer interacts with 1 SecA dimer.

It is found in the cytoplasm. Functionally, one of the proteins required for the normal export of preproteins out of the cell cytoplasm. It is a molecular chaperone that binds to a subset of precursor proteins, maintaining them in a translocation-competent state. It also specifically binds to its receptor SecA. This Haemophilus influenzae (strain PittEE) protein is Protein-export protein SecB.